We begin with the raw amino-acid sequence, 443 residues long: SAM50-like protein CG7639 (443 aa).

The POTRA domain maps to Ala-23–Asn-101.

This sequence belongs to the SAM50/omp85 family. In terms of assembly, associates with the mitochondrial contact site and cristae organizing system (MICOS) complex (also known as MINOS or MitOS complex).

It is found in the mitochondrion outer membrane. In terms of biological role, may play a role in the maintenance of the structure of mitochondrial cristae. This is SAM50-like protein CG7639 from Drosophila melanogaster (Fruit fly).